The following is a 435-amino-acid chain: MSKNVVVIGTQWGDEGKGKIVDWLTDQAQGVVRFQGGHNAGHTLVIGGKQTVLHLIPSGILRKDVACYIGNGVVVSPQALLDEVGMLERAGIDVLSRLRISEACPLILPCHVALDNAREIARGLGKIGTTGRGIGPAYEDKVARRAVRLQDLFHRDRFAAKLGEILDYHNFVLKNYFQSPVVDFQQTMDETLSLVERIRPMVADVPRLLFEANRAGANLLFEGAQGALLDIDHGTYPFVTSSNCIAGAATTGSGIGPQMLHYVLGITKAYTTRVGAGPFPTELDDDVGRHLAKRGNEFGATTGRPRRCGWFDAAALKRSIQINGVSGLCVTKLDVMDGVETLRLGVGYKMMGKGEEEKFSAIMPVGAEELASCEPVYEEMPGWSGSTVGIRNFEQLPMAARNYLKRMEEVCEVSIDMISTGPDREETIVLRHPFE.

GTP-binding positions include 13-19 and 41-43; these read GDEGKGK and GHT. D14 serves as the catalytic Proton acceptor. Mg(2+) contacts are provided by D14 and G41. Residues 14–17, 39–42, T130, R144, Q225, T240, and R304 each bind IMP; these read DEGK and NAGH. H42 serves as the catalytic Proton donor. 300 to 306 is a binding site for substrate; it reads ATTGRPR. GTP is bound by residues R306, 332–334, and 419–421; these read KLD and STG.

The protein belongs to the adenylosuccinate synthetase family. Homodimer. The cofactor is Mg(2+).

The protein resides in the cytoplasm. The enzyme catalyses IMP + L-aspartate + GTP = N(6)-(1,2-dicarboxyethyl)-AMP + GDP + phosphate + 2 H(+). The protein operates within purine metabolism; AMP biosynthesis via de novo pathway; AMP from IMP: step 1/2. Plays an important role in the de novo pathway of purine nucleotide biosynthesis. Catalyzes the first committed step in the biosynthesis of AMP from IMP. The polypeptide is Adenylosuccinate synthetase (Nitrosospira multiformis (strain ATCC 25196 / NCIMB 11849 / C 71)).